Reading from the N-terminus, the 232-residue chain is DOA4-independent degradation protein 4 (232 aa).

Residues 14-97 (PQERLKKNQR…AISLRIQAVR (84 aa)) are a coiled coil. The segment at 183–232 (LQSTPQNLVSNAPIAETAMGIPEPIGAGSEFHGNPDDDLQARLNTLKKQT) is interaction with VPS4. The tract at residues 203–232 (IPEPIGAGSEFHGNPDDDLQARLNTLKKQT) is disordered. The MIT-interacting motif motif lies at 219–229 (DDLQARLNTLK).

Belongs to the SNF7 family. In terms of assembly, core component of the ESCRT-III complex (endosomal sorting required for transport complex III). ESCRT-III appears to be sequentially assembled as a flat lattice on the endosome membrane and forms a transient 450 kDa complex that contains DID4, oligomerized SNF7, VPS20 and VPS24. SNF7 oligomerization into a membrane-associated filament is nucleated by association of SNF7 with VPS20; the process is terminated through association of VPS24, possibly by capping the SNF7 filament. VPS24 subsequently associates with DID4/VPS2.

The protein resides in the cytoplasm. It localises to the endosome membrane. Required for the sorting and concentration of proteins resulting in the entry of these proteins into the invaginating vesicles of the multivesicular body (MVB). Acts a component of the ESCRT-III complex, which appears to be critical for late steps in MVB sorting, such as membrane invagination and final cargo sorting and recruitment of late-acting components of the sorting machinery. The MVB pathway requires the sequential function of ESCRT-O, -I,-II and -III complex assemblies. Can directly stimulate VPS4 ATPase activity. The DID4/VPS2-VPS24 subcomplex is required for the VPS4-dependent dissociation of ESCRT-III. This chain is DOA4-independent degradation protein 4 (DID4), found in Saccharomyces cerevisiae (strain ATCC 204508 / S288c) (Baker's yeast).